Reading from the N-terminus, the 188-residue chain is Large ribosomal subunit protein uL5 (188 aa).

Belongs to the universal ribosomal protein uL5 family. Part of the 50S ribosomal subunit; contacts the 5S rRNA and probably tRNA. Forms a bridge to the 30S subunit in the 70S ribosome.

In terms of biological role, this is one of the proteins that bind and probably mediate the attachment of the 5S RNA into the large ribosomal subunit, where it forms part of the central protuberance. In the 70S ribosome it contacts protein S13 of the 30S subunit (bridge B1b), connecting the 2 subunits; this bridge is implicated in subunit movement. May contact the P site tRNA; the 5S rRNA and some of its associated proteins might help stabilize positioning of ribosome-bound tRNAs. This chain is Large ribosomal subunit protein uL5, found in Pyrococcus horikoshii (strain ATCC 700860 / DSM 12428 / JCM 9974 / NBRC 100139 / OT-3).